Reading from the N-terminus, the 278-residue chain is 4-diphosphocytidyl-2-C-methyl-D-erythritol kinase (278 aa).

Lysine 9 is a catalytic residue. Residue 89 to 99 (PVASGIGGGSA) participates in ATP binding. The active site involves aspartate 128.

Belongs to the GHMP kinase family. IspE subfamily.

The catalysed reaction is 4-CDP-2-C-methyl-D-erythritol + ATP = 4-CDP-2-C-methyl-D-erythritol 2-phosphate + ADP + H(+). The protein operates within isoprenoid biosynthesis; isopentenyl diphosphate biosynthesis via DXP pathway; isopentenyl diphosphate from 1-deoxy-D-xylulose 5-phosphate: step 3/6. Functionally, catalyzes the phosphorylation of the position 2 hydroxy group of 4-diphosphocytidyl-2C-methyl-D-erythritol. In Cereibacter sphaeroides (strain ATCC 17025 / ATH 2.4.3) (Rhodobacter sphaeroides), this protein is 4-diphosphocytidyl-2-C-methyl-D-erythritol kinase.